The primary structure comprises 229 residues: Putative N-acetylmannosamine-6-phosphate 2-epimerase (229 aa).

This sequence belongs to the NanE family.

It carries out the reaction an N-acyl-D-glucosamine 6-phosphate = an N-acyl-D-mannosamine 6-phosphate. Its pathway is amino-sugar metabolism; N-acetylneuraminate degradation; D-fructose 6-phosphate from N-acetylneuraminate: step 3/5. Its function is as follows. Converts N-acetylmannosamine-6-phosphate (ManNAc-6-P) to N-acetylglucosamine-6-phosphate (GlcNAc-6-P). In Escherichia coli O127:H6 (strain E2348/69 / EPEC), this protein is Putative N-acetylmannosamine-6-phosphate 2-epimerase.